The chain runs to 626 residues: METKQFKAESKRLLDLMIHSIYTQKEIFLRELISNASDAIDKIYYRALTDEALNFNKEDYYIKIIPDKEKRILRIIDTGIGMTKEELEENLGVIAKSGSLAFKSAHELKDGYDIIGQFGVGFYSSFMVAETVTVISKSIDSESGYKWESTGVDGYTIEPWDKDTVGTEIVLRIKEDTEDENYSEYLEEYRLRNIIKKYSDFIRYPIKMDIHNKRLKENSEDDYEDYVEEQTINSMVPIWRKNKNELTKEDYDNFYMEKRYGFDKPVKHIHISADGAVRYNAILFIPERTPFDYYTKEYEKGLELYSNGVLIMNKCSDLLPDYFSFVKGMVDSEDLSLNISREMLQHDRQLKLIGKNIKNKIKNELMSLLKEDRTQYEAFFEAFGRQLKYGIYSEFGSNKDVLQDLLLFYSSKEKKLVTLDEYISRMSEEQKYIYYATGESKERIEKLPQTELVSEKGFEILYLTEDIDEFAIKVLMSYKDKEFKSVSSSDLGIEDSETEKNTETEELENKELFEKMTALLSDKVTAVRISKRLKSHPVCLANEGEISIEMEKILSAMPNNENIKANKILEINGNHQVFEVLKDAYKNDSEKFGLFTELLYNQALLIEGLPINDPVEFSNSICKLMI.

The a; substrate-binding stretch occupies residues 1-341; sequence METKQFKAES…SEDLSLNISR (341 aa). The interval 342-552 is b; it reads EMLQHDRQLK…EGEISIEMEK (211 aa). Residues 553–626 form a c region; that stretch reads ILSAMPNNEN…FSNSICKLMI (74 aa).

Belongs to the heat shock protein 90 family. In terms of assembly, homodimer.

The protein localises to the cytoplasm. Molecular chaperone. Has ATPase activity. The chain is Chaperone protein HtpG from Alkaliphilus oremlandii (strain OhILAs) (Clostridium oremlandii (strain OhILAs)).